A 259-amino-acid chain; its full sequence is Eukaryotic translation initiation factor 4E1 (259 aa).

The segment at 1–70 (MQSDFHRMKN…TATTTAPAGD (70 aa)) is disordered. Residues 18–27 (FKTSAPSTEQ) are compositionally biased toward polar residues. The span at 41–51 (EAKDVKPKEDP) shows a compositional bias: basic and acidic residues. The segment covering 54–70 (TGEPAGNTATTTAPAGD) has biased composition (low complexity). MRNA is bound by residues 100 to 101 (WE), 146 to 147 (WE), and 199 to 204 (RGKSNK).

It belongs to the eukaryotic initiation factor 4E family. As to quaternary structure, eIF4F is a multi-subunit complex, the composition of which varies with external and internal environmental conditions. It is composed of at least eIF4A, eIF4E1 and eIF4G1. Recruited by cup in oocytes and in early embryos, preventing the interaction with eIF4G. The interaction with cup therefore prevents the translation of key transcripts such as oskar (osk) and nanos (nos) in some regions in the early embryo. Interacts with mxt. Interacts with 4E-T and Thor. Forms a RNP containing at least me31B, eIF4E1, cup, tral and pAbp; this interaction is required for the translational silencing of maternal mRNAs during the maternal-to-zygotic transition. Post-translationally, phosphorylation increases the ability of the protein to bind to mRNA caps and to form the eIF4F complex. Expressed at the posterior end of developing oocytes (at protein level). Preferential expression in the pole cells, at different developmental stages.

It localises to the cytoplasm. Its subcellular location is the cytoplasmic ribonucleoprotein granule. The protein resides in the nucleus. The protein localises to the nuclear body. Functionally, recognizes and binds the 7-methylguanosine (m7G)-containing mRNA cap during an early step in the initiation of protein synthesis and facilitates ribosome binding by inducing the unwinding of the mRNAs secondary structures. In 0-1 hour embryos, forms a complex with me31B, cup, tral and pAbp which binds to various mRNAs including maternal mRNAs, and down-regulates their expression during the maternal-to-zygotic transition. The protein is Eukaryotic translation initiation factor 4E1 of Drosophila melanogaster (Fruit fly).